The chain runs to 341 residues: Anthranilate phosphoribosyltransferase (341 aa).

5-phospho-alpha-D-ribose 1-diphosphate contacts are provided by residues Gly80, 83–84, Thr88, 90–93, 108–116, and Ser120; these read GD, NIST, and KHGNYSVSS. Residue Gly80 coordinates anthranilate. Ser92 contributes to the Mg(2+) binding site. Asn111 is an anthranilate binding site. Position 166 (Arg166) interacts with anthranilate. Asp224 and Glu225 together coordinate Mg(2+).

The protein belongs to the anthranilate phosphoribosyltransferase family. Homodimer. It depends on Mg(2+) as a cofactor.

The catalysed reaction is N-(5-phospho-beta-D-ribosyl)anthranilate + diphosphate = 5-phospho-alpha-D-ribose 1-diphosphate + anthranilate. Its pathway is amino-acid biosynthesis; L-tryptophan biosynthesis; L-tryptophan from chorismate: step 2/5. Its function is as follows. Catalyzes the transfer of the phosphoribosyl group of 5-phosphorylribose-1-pyrophosphate (PRPP) to anthranilate to yield N-(5'-phosphoribosyl)-anthranilate (PRA). The sequence is that of Anthranilate phosphoribosyltransferase from Haloquadratum walsbyi (strain DSM 16790 / HBSQ001).